Reading from the N-terminus, the 601-residue chain is DNA ligase (601 aa).

Asp258 contacts ATP. Lys260 acts as the N6-AMP-lysine intermediate in catalysis. 6 residues coordinate ATP: Arg265, Arg280, Glu310, Phe350, Arg427, and Lys433. The segment at 568–601 (DKSPEDATTTDEILEMYNKQPKKKIESPPIDESV) is disordered.

This sequence belongs to the ATP-dependent DNA ligase family. Requires Mg(2+) as cofactor.

It catalyses the reaction ATP + (deoxyribonucleotide)n-3'-hydroxyl + 5'-phospho-(deoxyribonucleotide)m = (deoxyribonucleotide)n+m + AMP + diphosphate.. Its function is as follows. DNA ligase that seals nicks in double-stranded DNA during DNA replication, DNA recombination and DNA repair. This chain is DNA ligase, found in Saccharolobus islandicus (strain L.S.2.15 / Lassen #1) (Sulfolobus islandicus).